Here is a 125-residue protein sequence, read N- to C-terminus: Ribonuclease P protein component (125 aa).

This sequence belongs to the RnpA family. In terms of assembly, consists of a catalytic RNA component (M1 or rnpB) and a protein subunit.

It carries out the reaction Endonucleolytic cleavage of RNA, removing 5'-extranucleotides from tRNA precursor.. Its function is as follows. RNaseP catalyzes the removal of the 5'-leader sequence from pre-tRNA to produce the mature 5'-terminus. It can also cleave other RNA substrates such as 4.5S RNA. The protein component plays an auxiliary but essential role in vivo by binding to the 5'-leader sequence and broadening the substrate specificity of the ribozyme. The sequence is that of Ribonuclease P protein component from Clostridium perfringens (strain ATCC 13124 / DSM 756 / JCM 1290 / NCIMB 6125 / NCTC 8237 / Type A).